The following is a 72-amino-acid chain: Cytochrome b-c1 complex subunit 8-2, mitochondrial (72 aa).

Topologically, residues 1–41 are mitochondrial matrix; sequence MGKQPVKLKAVVYALSPFQQKIMTGLWKDLPEKIHHKVSEN. The chain crosses the membrane as a helical span at residues 42 to 58; it reads WISTILLVAPVVGTYSY. Residues 59-72 lie on the Mitochondrial intermembrane side of the membrane; the sequence is AQYFKEQEKLEHRF.

This sequence belongs to the UQCRQ/QCR8 family. In terms of assembly, component of the ubiquinol-cytochrome c oxidoreductase (cytochrome b-c1 complex, complex III, CIII), a multisubunit enzyme composed of 10 subunits. The complex is composed of 3 respiratory subunits cytochrome b (MT-CYB), cytochrome c1 (CYC1-1 or CYC1-2) and Rieske protein (UCR1-1 or UCR1-2), 2 core protein subunits MPPalpha1 (or MPPalpha2) and MPPB, and 5 low-molecular weight protein subunits QCR7-1 (or QCR7-2), UCRQ-1 (or UCRQ-2), QCR9, UCRY and probably QCR6-1 (or QCR6-2). The complex exists as an obligatory dimer and forms supercomplexes (SCs) in the inner mitochondrial membrane with NADH-ubiquinone oxidoreductase (complex I, CI), resulting in different assemblies (supercomplexes SCI(1)III(2) and SCI(2)III(4)).

The protein resides in the mitochondrion inner membrane. In terms of biological role, component of the ubiquinol-cytochrome c oxidoreductase, a multisubunit transmembrane complex that is part of the mitochondrial electron transport chain which drives oxidative phosphorylation. The respiratory chain contains 3 multisubunit complexes succinate dehydrogenase (complex II, CII), ubiquinol-cytochrome c oxidoreductase (cytochrome b-c1 complex, complex III, CIII) and cytochrome c oxidase (complex IV, CIV), that cooperate to transfer electrons derived from NADH and succinate to molecular oxygen, creating an electrochemical gradient over the inner membrane that drives transmembrane transport and the ATP synthase. The cytochrome b-c1 complex catalyzes electron transfer from ubiquinol to cytochrome c, linking this redox reaction to translocation of protons across the mitochondrial inner membrane, with protons being carried across the membrane as hydrogens on the quinol. In the process called Q cycle, 2 protons are consumed from the matrix, 4 protons are released into the intermembrane space and 2 electrons are passed to cytochrome c. The sequence is that of Cytochrome b-c1 complex subunit 8-2, mitochondrial (UCRQ-2) from Arabidopsis thaliana (Mouse-ear cress).